The chain runs to 268 residues: Ribosomal RNA small subunit methyltransferase A (268 aa).

Residues asparagine 18, leucine 20, glycine 45, glutamate 66, aspartate 91, and asparagine 112 each contribute to the S-adenosyl-L-methionine site.

The protein belongs to the class I-like SAM-binding methyltransferase superfamily. rRNA adenine N(6)-methyltransferase family. RsmA subfamily.

The protein resides in the cytoplasm. The catalysed reaction is adenosine(1518)/adenosine(1519) in 16S rRNA + 4 S-adenosyl-L-methionine = N(6)-dimethyladenosine(1518)/N(6)-dimethyladenosine(1519) in 16S rRNA + 4 S-adenosyl-L-homocysteine + 4 H(+). Specifically dimethylates two adjacent adenosines (A1518 and A1519) in the loop of a conserved hairpin near the 3'-end of 16S rRNA in the 30S particle. May play a critical role in biogenesis of 30S subunits. The chain is Ribosomal RNA small subunit methyltransferase A from Shewanella baltica (strain OS223).